The sequence spans 67 residues: Large ribosomal subunit protein bL35 (67 aa).

The protein belongs to the bacterial ribosomal protein bL35 family.

This Gloeothece citriformis (strain PCC 7424) (Cyanothece sp. (strain PCC 7424)) protein is Large ribosomal subunit protein bL35.